The following is a 1233-amino-acid chain: Insulin receptor substrate 1 (1233 aa).

At Ser3 the chain carries Phosphoserine. The tract at residues 3–133 is mediates interaction with PHIP; sequence SPPDTDGFSD…AGGGCGGSCS (131 aa). The 104-residue stretch at 12–115 folds into the PH domain; that stretch reads DVRKVGYLRK…WYQALLQLHN (104 aa). At Ser99 the chain carries Phosphoserine; by CK2. The IRS-type PTB domain maps to 155 to 259; sequence FKEVWQVILK…EAMRAMSDEF (105 aa). The disordered stretch occupies residues 257-425; sequence DEFRPRSKSQ…SDGGFISSDE (169 aa). The segment covering 264–276 has biased composition (low complexity); the sequence is KSQSSSSCSNPIS. A phosphoserine; by RPS6KB1 mark is found at Ser265 and Ser302. The residue at position 307 (Ser307) is a Phosphoserine; by IKKB, MAPK8 and RPS6KB1. A phosphoserine mark is found at Ser318, Ser325, Ser340, and Ser343. Residues 349–358 show a composition bias toward basic residues; it reads THAHRHRGSS. Low complexity-rich tracts occupy residues 378–399 and 407–419; these read SPSA…GSTS and SSAS…SDGG. Position 414 is a phosphoserine (Ser414). Thr441 and Thr448 each carry phosphothreonine. The residue at position 460 (Tyr460) is a Phosphotyrosine; by INSR. Residues 460–463 carry the YXXM motif 1 motif; the sequence is YICM. Ser522 carries the phosphoserine; by RPS6KB1 modification. 2 short sequence motifs (YXXM motif) span residues 546–549 and 608–611; these read YTEM and YMPM. The residue at position 608 (Tyr608) is a Phosphotyrosine; by INSR. Phosphoserine is present on Ser612. At Tyr628 the chain carries Phosphotyrosine; by INSR. A YXXM motif 4 motif is present at residues 628 to 631; it reads YMPM. Position 632 is a phosphoserine; by RPS6KB1 and ROCK2 (Ser632). Residues 651–720 are disordered; the sequence is QRVDPNGYMM…PPVESGGGKL (70 aa). A Phosphotyrosine modification is found at Tyr658. Positions 658-661 match the YXXM motif 5 motif; the sequence is YMMM. Positions 662–689 are enriched in low complexity; sequence SPSGSCSPDIGGGSSSSSSISAAPSGSS. The short motif at 727 to 730 is the YXXM motif 6 element; that stretch reads YMNM. Positions 766 to 985 are disordered; that stretch reads FKHTQRPGEP…VPNSRGDYMT (220 aa). Residues 771–780 show a composition bias toward basic and acidic residues; it reads RPGEPEEGAR. 2 stretches are compositionally biased toward low complexity: residues 785–794 and 801–810; these read RLSSSSGRLR and DSSSSTSSDS. Ser789 is modified (phosphoserine; by AMPK and SIK2). Residue Ser887 is modified to Phosphoserine. Phosphotyrosine; by INSR occurs at positions 891, 935, and 983. The GRB2-binding stretch occupies residues 891-893; it reads YVN. 3 short sequence motifs (YXXM motif) span residues 935–938, 983–986, and 1006–1009; these read YMNM, YMTM, and YADM. The interval 1015 to 1137 is disordered; sequence AEKASLPRPT…GSEDVKRHSS (123 aa). Residues 1032-1042 show a composition bias toward low complexity; the sequence is STASSSASVTP. Polar residues-rich tracts occupy residues 1043–1052 and 1069–1081; these read QGATAEQATH and TRVN…NQSA. Residues Ser1096 and Ser1097 each carry the phosphoserine modification. Residues 1116–1129 are compositionally biased toward gly residues; the sequence is AAVGGSGGGGGGGS. A Phosphotyrosine; by INSR modification is found at Tyr1173. The disordered stretch occupies residues 1178–1233; that stretch reads LAKEHSQDCPSQQQSLPPPPPHQPLGSNEGNSPRRSSEDLSNYASISFQKQPEDRQ. A Glycyl lysine isopeptide (Lys-Gly) (interchain with G-Cter in ubiquitin) cross-link involves residue Lys1180. Positions 1203–1227 are enriched in polar residues; the sequence is GSNEGNSPRRSSEDLSNYASISFQK. Tyr1220 carries the post-translational modification Phosphotyrosine; by INSR.

In terms of assembly, interacts (via phosphorylated YXXM motifs) with PIK3R1. Interacts with ROCK1. Interacts with GRB2. Interacts with SOCS7. Interacts (via IRS-type PTB domain) with IGF1R and INSR (via the tyrosine-phosphorylated NPXY motif). Interacts with UBTF and PIK3CA. Interacts (via PH domain) with PHIP. Interacts with FER. Interacts with ALK. Interacts with EIF2AK2/PKR. Interacts with GKAP1. Interacts with DGKZ in the absence of insulin; insulin stimulation decreases this interaction. Found in a ternary complex with DGKZ and PIP5K1A in the absence of insulin stimulation. Interacts with SQSTM1; the interaction is disrupted by the presence of tensin TNS2. Interacts with NCK1 (via SH2 domain). Interacts with NCK2 (via SH3 domain). Interacts with SH2B1; this interaction enhances leptin-induced activation of the PI3-kinase pathway. Interacts with DVL2; this interaction promotes the Wnt/beta-catenin signaling pathway. Serine phosphorylation of IRS1 is a mechanism for insulin resistance. Ser-307 phosphorylation inhibits insulin action through disruption of IRS1 interaction with the insulin receptor. Phosphorylation of Tyr-891 is required for GRB2-binding. Phosphorylated by ALK. Phosphorylated at Ser-265, Ser-302, Ser-632 and Ser-1097 by RPS6KB1; phosphorylation induces accelerated degradation of IRS1. Phosphorylated on tyrosine residues in response to insulin. In skeletal muscles, dephosphorylated on Tyr-608 by TNS2 under anabolic conditions; dephosphorylation results in the proteasomal degradation of IRS1. In terms of processing, ubiquitinated by the Cul7-RING(FBXW8) complex in a mTOR-dependent manner, leading to its degradation: the Cul7-RING(FBXW8) complex recognizes and binds IRS1 previously phosphorylated by S6 kinase (RPS6KB1 or RPS6KB2). Ubiquitinated by TRAF4 through 'Lys-29' linkage; this ubiquitination regulates the interaction of IRS1 with IGFR and IRS1 tyrosine phosphorylation upon IGF1 stimulation. Post-translationally, S-nitrosylation at by BLVRB inhibits its activity. In terms of tissue distribution, expressed in osteoblasts, but not in osteoclasts.

It localises to the cytoplasm. The protein resides in the nucleus. Its function is as follows. Signaling adapter protein that participates in the signal transduction from two prominent receptor tyrosine kinases, insulin receptor/INSR and insulin-like growth factor I receptor/IGF1R. Plays therefore an important role in development, growth, glucose homeostasis as well as lipid metabolism. Upon phosphorylation by the insulin receptor, functions as a signaling scaffold that propagates insulin action through binding to SH2 domain-containing proteins including the p85 regulatory subunit of PI3K, NCK1, NCK2, GRB2 or SHP2. Recruitment of GRB2 leads to the activation of the guanine nucleotide exchange factor SOS1 which in turn triggers the Ras/Raf/MEK/MAPK signaling cascade. Activation of the PI3K/AKT pathway is responsible for most of insulin metabolic effects in the cell, and the Ras/Raf/MEK/MAPK is involved in the regulation of gene expression and in cooperation with the PI3K pathway regulates cell growth and differentiation. Acts a positive regulator of the Wnt/beta-catenin signaling pathway through suppression of DVL2 autophagy-mediated degradation leading to cell proliferation. The chain is Insulin receptor substrate 1 (Irs1) from Mus musculus (Mouse).